Consider the following 249-residue polypeptide: ATP synthase subunit a (249 aa).

Transmembrane regions (helical) follow at residues 30–50 (SAYMLVAVAVISLLMIGGVAG), 84–104 (FFPLVFSLFMFIMISNMVGII), 114–134 (LIVTAALALLVFLTVLIYGFY), 143–163 (IFVPSGVPVFILPLVVFIEVF), 196–216 (LLAGLGIAGYFGAVLPLGMVI), and 221–241 (LELLVAFLQAYVFAILTCIYL).

This sequence belongs to the ATPase A chain family. As to quaternary structure, F-type ATPases have 2 components, CF(1) - the catalytic core - and CF(0) - the membrane proton channel. CF(1) has five subunits: alpha(3), beta(3), gamma(1), delta(1), epsilon(1). CF(0) has four main subunits: a, b, b' and c.

Its subcellular location is the cell inner membrane. Key component of the proton channel; it plays a direct role in the translocation of protons across the membrane. This chain is ATP synthase subunit a, found in Rhodopseudomonas palustris (strain BisB18).